The following is a 213-amino-acid chain: Small ribosomal subunit protein uS4 (213 aa).

In terms of domain architecture, S4 RNA-binding spans 97 to 165 (RRLDNVVYRM…AKEQLRIKNA (69 aa)).

It belongs to the universal ribosomal protein uS4 family. As to quaternary structure, part of the 30S ribosomal subunit. Contacts protein S5. The interaction surface between S4 and S5 is involved in control of translational fidelity.

Its function is as follows. One of the primary rRNA binding proteins, it binds directly to 16S rRNA where it nucleates assembly of the body of the 30S subunit. Functionally, with S5 and S12 plays an important role in translational accuracy. In Psychrobacter sp. (strain PRwf-1), this protein is Small ribosomal subunit protein uS4.